A 178-amino-acid chain; its full sequence is Probable chorismate pyruvate-lyase (178 aa).

Substrate contacts are provided by arginine 72, leucine 110, and glutamate 169.

Belongs to the UbiC family.

It is found in the cytoplasm. It carries out the reaction chorismate = 4-hydroxybenzoate + pyruvate. It functions in the pathway cofactor biosynthesis; ubiquinone biosynthesis. Removes the pyruvyl group from chorismate, with concomitant aromatization of the ring, to provide 4-hydroxybenzoate (4HB) for the ubiquinone pathway. The protein is Probable chorismate pyruvate-lyase of Nitrosomonas eutropha (strain DSM 101675 / C91 / Nm57).